The primary structure comprises 376 residues: Heat-inducible transcription repressor HrcA (376 aa).

The protein belongs to the HrcA family.

Functionally, negative regulator of class I heat shock genes (grpE-dnaK-dnaJ and groELS operons). Prevents heat-shock induction of these operons. The chain is Heat-inducible transcription repressor HrcA from Chloroflexus aggregans (strain MD-66 / DSM 9485).